A 111-amino-acid polypeptide reads, in one-letter code: MTRGFGPFGKIQEALKKAQEVRDGAQRLQKELEEMEIVGEAGNGLVKVTVNGNQEPLKVSLDPQVLQESVDVVEDLLLTAMVNAYTQSAETMRKRMEELTGNISLPGLGLG.

The protein belongs to the YbaB/EbfC family. As to quaternary structure, homodimer.

It is found in the cytoplasm. The protein localises to the nucleoid. Binds to DNA and alters its conformation. May be involved in regulation of gene expression, nucleoid organization and DNA protection. The protein is Nucleoid-associated protein CYB_2894 of Synechococcus sp. (strain JA-2-3B'a(2-13)) (Cyanobacteria bacterium Yellowstone B-Prime).